Consider the following 391-residue polypeptide: 1-deoxy-D-xylulose 5-phosphate reductoisomerase (391 aa).

Residues Thr-10, Gly-11, Ser-12, Ile-13, Asn-38, and Asn-122 each contribute to the NADPH site. 1-deoxy-D-xylulose 5-phosphate is bound at residue Lys-123. Residue Glu-124 participates in NADPH binding. Asp-148 lines the Mn(2+) pocket. 4 residues coordinate 1-deoxy-D-xylulose 5-phosphate: Ser-149, Glu-150, Ser-173, and His-196. Residue Glu-150 participates in Mn(2+) binding. Gly-202 is a binding site for NADPH. Residues Ser-209, Asn-214, Lys-215, and Glu-218 each coordinate 1-deoxy-D-xylulose 5-phosphate. Residue Glu-218 coordinates Mn(2+).

This sequence belongs to the DXR family. It depends on Mg(2+) as a cofactor. Requires Mn(2+) as cofactor.

The enzyme catalyses 2-C-methyl-D-erythritol 4-phosphate + NADP(+) = 1-deoxy-D-xylulose 5-phosphate + NADPH + H(+). It functions in the pathway isoprenoid biosynthesis; isopentenyl diphosphate biosynthesis via DXP pathway; isopentenyl diphosphate from 1-deoxy-D-xylulose 5-phosphate: step 1/6. In terms of biological role, catalyzes the NADPH-dependent rearrangement and reduction of 1-deoxy-D-xylulose-5-phosphate (DXP) to 2-C-methyl-D-erythritol 4-phosphate (MEP). This chain is 1-deoxy-D-xylulose 5-phosphate reductoisomerase, found in Wolbachia pipientis subsp. Culex pipiens (strain wPip).